The primary structure comprises 129 residues: Protein Turandot C (129 aa).

A signal peptide spans 1–21 (MNASISLLCFALLLISPFCLG).

This sequence belongs to the Turandot family.

It is found in the secreted. Its function is as follows. A humoral factor that may play a role in stress tolerance. This chain is Protein Turandot C, found in Drosophila sechellia (Fruit fly).